Here is a 362-residue protein sequence, read N- to C-terminus: Peptide chain release factor 1 (362 aa).

Q237 carries the N5-methylglutamine modification. The span at 282 to 296 (QQEEDKRRAEADSTR) shows a compositional bias: basic and acidic residues. Residues 282-304 (QQEEDKRRAEADSTRRSILSTGD) form a disordered region.

Belongs to the prokaryotic/mitochondrial release factor family. Methylated by PrmC. Methylation increases the termination efficiency of RF1.

The protein resides in the cytoplasm. Functionally, peptide chain release factor 1 directs the termination of translation in response to the peptide chain termination codons UAG and UAA. This chain is Peptide chain release factor 1, found in Tolumonas auensis (strain DSM 9187 / NBRC 110442 / TA 4).